A 388-amino-acid polypeptide reads, in one-letter code: GTPase Obg (388 aa).

The Obg domain maps to 1–159; sequence MKFVDEAVIK…RELRLELLLL (159 aa). One can recognise an OBG-type G domain in the interval 160-333; the sequence is ADVGMLGLPN…LCYKLADFME (174 aa). GTP-binding positions include 166–173, 191–195, 213–216, 283–286, and 314–316; these read GLPNAGKS, FTTLI, DIPG, NKVD, and SAV. Mg(2+) contacts are provided by Ser173 and Thr193. Residues 359–380 are disordered; that stretch reads NQGEVITEDDDDWDDWDDEEDD. Acidic residues predominate over residues 364 to 380; sequence ITEDDDDWDDWDDEEDD.

This sequence belongs to the TRAFAC class OBG-HflX-like GTPase superfamily. OBG GTPase family. Monomer. It depends on Mg(2+) as a cofactor.

Its subcellular location is the cytoplasm. In terms of biological role, an essential GTPase which binds GTP, GDP and possibly (p)ppGpp with moderate affinity, with high nucleotide exchange rates and a fairly low GTP hydrolysis rate. Plays a role in control of the cell cycle, stress response, ribosome biogenesis and in those bacteria that undergo differentiation, in morphogenesis control. The chain is GTPase Obg from Vibrio vulnificus (strain YJ016).